We begin with the raw amino-acid sequence, 705 residues long: Forkhead box protein P1 (705 aa).

The segment covering 1-19 (MMQESGSETKSNGSAIQNG) has biased composition (polar residues). Residues 1–41 (MMQESGSETKSNGSAIQNGSSGGNHLLECGALRDTRSNGEA) are disordered. Residue Ser-113 is modified to Phosphoserine. 2 disordered regions span residues 267-286 (HTAE…TSTC) and 291-326 (APSK…EHPH). 2 stretches are compositionally biased toward polar residues: residues 276–286 (NHSSLDLTSTC) and 291–311 (APSK…QLSV). Basic and acidic residues predominate over residues 314–326 (PKRESLSHEEHPH). A Glycyl lysine isopeptide (Lys-Gly) (interchain with G-Cter in SUMO2) cross-link involves residue Lys-315. The C2H2-type zinc finger occupies 334–359 (GVCKWPGCEAVCDDFPAFLKHLNSEH). Residues 376 to 397 (VQQLELQLAKDKERLQAMMTHL) are leucine-zipper. Glycyl lysine isopeptide (Lys-Gly) (interchain with G-Cter in SUMO2) cross-links involve residues Lys-400 and Lys-405. The tract at residues 410-414 (PLNLV) is CTBP1-binding. Polar residues predominate over residues 418-431 (TLSKSASEASPQSL). The disordered stretch occupies residues 418–450 (TLSKSASEASPQSLPHTPTTPTAPLTPVTQGPS). The span at 432-446 (PHTPTTPTAPLTPVT) shows a compositional bias: low complexity. Lys-470 is covalently cross-linked (Glycyl lysine isopeptide (Lys-Gly) (interchain with G-Cter in SUMO2)). The segment at residues 493-583 (RPPFTYASLI…PQKISGNPSL (91 aa)) is a DNA-binding region (fork-head). Residues 639 to 705 (EHTNSNESDS…EDEPVNEDME (67 aa)) form a disordered region. Over residues 640 to 651 (HTNSNESDSSPG) the composition is skewed to polar residues. At Thr-681 the chain carries Phosphothreonine. Residue Ser-686 is modified to Phosphoserine. Acidic residues predominate over residues 695 to 705 (YEDEPVNEDME).

Forms homodimers and heterodimers with FOXP2 and FOXP4. Dimerization is required for DNA-binding. Self-associates. Interacts with CTBP1. Interacts with NCOR2 and AR. Interacts with FOXP2. Interacts with TBR1. Interacts with AURKA; this interaction facilitates the phosphorylation of FOXP1, which suppresses the expression of FBXL7. Interacts with ZMYM2. As to expression, isoform 5 is specifically expressed in embryonic stem cells. Highest expression in the lung, brain, and spleen. Lower expression in heart, skeletal muscle, kidney, small intestine (isoform 3 not present) and liver.

Its subcellular location is the nucleus. Its function is as follows. Transcriptional repressor. Can act with CTBP1 to synergistically repress transcription but CTPBP1 is not essential. Plays an important role in the specification and differentiation of lung epithelium. Acts cooperatively with FOXP4 to regulate lung secretory epithelial cell fate and regeneration by restricting the goblet cell lineage program; the function may involve regulation of AGR2. Essential transcriptional regulator of B-cell development. Involved in regulation of cardiac muscle cell proliferation. Involved in the columnar organization of spinal motor neurons. Promotes the formation of the lateral motor neuron column (LMC) and the preganglionic motor column (PGC) and is required for respective appropriate motor axon projections. The segment-appropriate generation of spinal cord motor columns requires cooperation with other Hox proteins. Can regulate PITX3 promoter activity; may promote midbrain identity in embryonic stem cell-derived dopamine neurons by regulating PITX3. Negatively regulates the differentiation of T follicular helper cells T(FH)s. Involved in maintenance of hair follicle stem cell quiescence; the function probably involves regulation of FGF18. Represses transcription of various pro-apoptotic genes and cooperates with NF-kappa B-signaling in promoting B-cell expansion by inhibition of caspase-dependent apoptosis. Binds to CSF1R promoter elements and is involved in regulation of monocyte differentiation and macrophage functions; repression of CSF1R in monocytes seems to involve NCOR2 as corepressor. Involved in endothelial cell proliferation, tube formation and migration indicative for a role in angiogenesis; the role in neovascularization seems to implicate suppression of SEMA5B. Can negatively regulate androgen receptor signaling. Acts as a transcriptional activator of the FBXL7 promoter; this activity is regulated by AURKA. In terms of biological role, involved in transcriptional regulation in embryonic stem cells (ESCs). Stimulates expression of transcription factors that are required for pluripotency and decreases expression of differentiation-associated genes. Has distinct DNA-binding specifities as compared to the canonical form and preferentially binds DNA with the sequence 5'-CGATACAA-3' (or closely related sequences). Promotes ESC self-renewal and pluripotency. The protein is Forkhead box protein P1 (Foxp1) of Mus musculus (Mouse).